Here is a 337-residue protein sequence, read N- to C-terminus: Fructose-1,6-bisphosphatase class 1 (337 aa).

Mg(2+) contacts are provided by Glu94, Asp116, Leu118, and Asp119. Residues 119–122 (DGSS), Asn210, and Lys276 contribute to the substrate site. Glu282 provides a ligand contact to Mg(2+).

The protein belongs to the FBPase class 1 family. In terms of assembly, homotetramer. The cofactor is Mg(2+).

The protein localises to the cytoplasm. The catalysed reaction is beta-D-fructose 1,6-bisphosphate + H2O = beta-D-fructose 6-phosphate + phosphate. It participates in carbohydrate biosynthesis; gluconeogenesis. This chain is Fructose-1,6-bisphosphatase class 1, found in Burkholderia multivorans (strain ATCC 17616 / 249).